A 189-amino-acid polypeptide reads, in one-letter code: Large ribosomal subunit protein bL17 (189 aa).

Residues 136–189 (KAAPAAEEEVVETEEAPAVEAEAAESEEAPAAEAEAAEAEAAETEEAPAAEDKK) form a disordered region. A compositionally biased stretch (acidic residues) spans 141-189 (AEEEVVETEEAPAVEAEAAESEEAPAAEAEAAEAEAAETEEAPAAEDKK).

The protein belongs to the bacterial ribosomal protein bL17 family. In terms of assembly, part of the 50S ribosomal subunit. Contacts protein L32.

The sequence is that of Large ribosomal subunit protein bL17 from Paenarthrobacter aurescens (strain TC1).